Here is a 483-residue protein sequence, read N- to C-terminus: Betaine aldehyde dehydrogenase (483 aa).

K(+) is bound by residues I27 and D93. Residue 149–151 (GAW) participates in NAD(+) binding. The active-site Charge relay system is K161. NAD(+) is bound at residue 175-178 (KPSE). Residue V179 participates in K(+) binding. 228–231 (SVPT) lines the NAD(+) pocket. V243 provides a ligand contact to K(+). Catalysis depends on E249, which acts as the Proton acceptor. NAD(+) contacts are provided by G251, C283, and E380. C283 serves as the catalytic Nucleophile. A Cysteine sulfenic acid (-SOH) modification is found at C283. Residues K450 and G453 each contribute to the K(+) site. E457 (charge relay system) is an active-site residue.

The protein belongs to the aldehyde dehydrogenase family. Dimer of dimers. The cofactor is K(+).

It catalyses the reaction betaine aldehyde + NAD(+) + H2O = glycine betaine + NADH + 2 H(+). The protein operates within amine and polyamine biosynthesis; betaine biosynthesis via choline pathway; betaine from betaine aldehyde: step 1/1. Functionally, involved in the biosynthesis of the osmoprotectant glycine betaine. Catalyzes the irreversible oxidation of betaine aldehyde to the corresponding acid. The protein is Betaine aldehyde dehydrogenase of Cereibacter sphaeroides (strain ATCC 17025 / ATH 2.4.3) (Rhodobacter sphaeroides).